Here is a 159-residue protein sequence, read N- to C-terminus: Aphid transmission protein (159 aa).

It belongs to the caulimoviridae ORF II family.

This protein is involved in virus transmission. This Cauliflower mosaic virus (strain BBC) (CaMV) protein is Aphid transmission protein.